The following is a 574-amino-acid chain: Hyaluronan synthase 3 (574 aa).

At 1–15 (MPVSLSTALRVVGTS) the chain is on the cytoplasmic side. The chain crosses the membrane as a helical span at residues 16-36 (LFALAVLGGILAAYVTGYQFI). Residues 37–44 (HTEKHYLS) are Extracellular-facing. The helical transmembrane segment at 45–65 (FGLYGAILGLHLFIQSLFAFL) threads the bilayer. Over 66-398 (EHRRMRAERQ…NALWFHKHHL (333 aa)) the chain is Cytoplasmic. A helical transmembrane segment spans residues 399–419 (WMTYESVVTGFFPFFLIATVI). Topologically, residues 420-429 (QLFYRGRIWN) are extracellular. A helical membrane pass occupies residues 430–450 (ILLFLLTVQLVGIIKATYACF). Residues 451 to 456 (LRGSAE) lie on the Cytoplasmic side of the membrane. Residues 457–477 (MIFVSLYALLYMSSLLPAKMF) traverse the membrane as a helical segment. Topologically, residues 478-494 (AIATINKSGWGTSGRRT) are extracellular. A helical membrane pass occupies residues 495-515 (IVVNFVGLLPVSVWAAVLLGG). Topologically, residues 516-530 (LAYTAYSQDLLSDTE) are cytoplasmic. Residues 531-551 (VAFLISGAVLYACYWVALLTL) form a helical membrane-spanning segment. The Extracellular segment spans residues 552 to 574 (YLAMVARRCGKRKEQCGLVFAEV).

The protein belongs to the NodC/HAS family. Mg(2+) is required as a cofactor. In terms of processing, O-GlcNAcylation increases the hyaluronan synthase activity, HAS3 stability and its plasma membrane residence. The concentration of UDP-GlcNAc controls the level of O-GlcNAc modification.

The protein resides in the cell membrane. It is found in the golgi apparatus membrane. Its subcellular location is the golgi apparatus. It localises to the trans-Golgi network membrane. The protein localises to the cytoplasmic vesicle. The enzyme catalyses [hyaluronan](n) + UDP-N-acetyl-alpha-D-glucosamine = N-acetyl-beta-D-glucosaminyl-(1-&gt;4)-[hyaluronan](n) + UDP + H(+). The catalysed reaction is N-acetyl-beta-D-glucosaminyl-(1-&gt;4)-[hyaluronan](n) + UDP-alpha-D-glucuronate = [hyaluronan](n+1) + UDP + H(+). The protein operates within glycan biosynthesis; hyaluronan biosynthesis. Its function is as follows. Catalyzes the addition of GlcNAc or GlcUA monosaccharides to the nascent hyaluronan polymer. Therefore, it is essential to hyaluronan synthesis a major component of most extracellular matrices that has a structural role in tissues architectures and regulates cell adhesion, migration and differentiation. This is one of three isoenzymes responsible for cellular hyaluronan synthesis. This chain is Hyaluronan synthase 3 (HAS3), found in Gallus gallus (Chicken).